The chain runs to 250 residues: uncharacterized protein (250 aa).

A divalent metal cation contacts are provided by Glu97, Glu99, and Asp128.

The protein belongs to the FAH family.

This is an uncharacterized protein from Archaeoglobus fulgidus (strain ATCC 49558 / DSM 4304 / JCM 9628 / NBRC 100126 / VC-16).